The sequence spans 865 residues: Rifampicin phosphotransferase (865 aa).

An ATP-binding region spans residues 2-314 (SGRLVVDLQD…FHIVQSRPIT (313 aa)). Positions 23, 117, 132, 136, 183, 297, 309, and 311 each coordinate ATP. The segment at 327–752 (FRVYLSVGHQ…TSEGVALSGA (426 aa)) is rifampicin-binding. Positions 403 to 430 (ENGEFEPTPAETDGGAPPAGDGAEPDEA) are disordered. Residues 409-424 (PTPAETDGGAPPAGDG) are compositionally biased toward low complexity. The interval 765–863 (GLAVSAGTVE…VHGTEGYIEL (99 aa)) is swivel phosphohistidine. The active-site Tele-phosphohistidine intermediate is the His-823.

This sequence belongs to the rifampicin phosphotransferase family.

The catalysed reaction is rifampicin + ATP + H2O = 21-phosphorifampicin + AMP + phosphate + 2 H(+). In terms of biological role, catalyzes the phosphorylation of rifampicin, also known as rifampin (RIF), leading to its inactivation. Confers high level resistance to a variety of clinically used rifamycin antibiotics. In Streptomyces sp, this protein is Rifampicin phosphotransferase.